Here is a 291-residue protein sequence, read N- to C-terminus: Elongation factor Ts (291 aa).

The segment at 78–81 is involved in Mg(2+) ion dislocation from EF-Tu; that stretch reads TDFV.

The protein belongs to the EF-Ts family.

It is found in the cytoplasm. Functionally, associates with the EF-Tu.GDP complex and induces the exchange of GDP to GTP. It remains bound to the aminoacyl-tRNA.EF-Tu.GTP complex up to the GTP hydrolysis stage on the ribosome. This chain is Elongation factor Ts, found in Ureaplasma parvum serovar 3 (strain ATCC 27815 / 27 / NCTC 11736).